The primary structure comprises 137 residues: Large ribosomal subunit protein uL16 (137 aa).

This sequence belongs to the universal ribosomal protein uL16 family. In terms of assembly, part of the 50S ribosomal subunit.

In terms of biological role, binds 23S rRNA and is also seen to make contacts with the A and possibly P site tRNAs. The chain is Large ribosomal subunit protein uL16 from Cellvibrio japonicus (strain Ueda107) (Pseudomonas fluorescens subsp. cellulosa).